We begin with the raw amino-acid sequence, 333 residues long: Sphingomyelinase C (333 aa).

The first 26 residues, 1 to 26 (MKGKLLKGVLSLGVGLGALYSGTSAQ), serve as a signal peptide directing secretion. A disulfide bond links Cys150 and Cys186.

The protein belongs to the neutral sphingomyelinase family. It depends on Mg(2+) as a cofactor. In terms of processing, the N-terminus is blocked.

The protein localises to the secreted. The enzyme catalyses a sphingomyelin + H2O = phosphocholine + an N-acylsphing-4-enine + H(+). With respect to regulation, activated by cobalt and manganese ions. Its function is as follows. Required, with sphingomyelinase, to effect target cell lysis (hemolysis). The polypeptide is Sphingomyelinase C (cerB) (Bacillus cereus).